The following is a 394-amino-acid chain: 1-deoxy-D-xylulose 5-phosphate reductoisomerase (394 aa).

Residues T11, G12, S13, I14, G37, N39, and N126 each contribute to the NADPH site. K127 provides a ligand contact to 1-deoxy-D-xylulose 5-phosphate. E128 is an NADPH binding site. A Mn(2+)-binding site is contributed by D152. 4 residues coordinate 1-deoxy-D-xylulose 5-phosphate: S153, E154, S178, and H201. E154 contacts Mn(2+). G207 contributes to the NADPH binding site. 4 residues coordinate 1-deoxy-D-xylulose 5-phosphate: S214, N219, K220, and E223. Residue E223 participates in Mn(2+) binding.

This sequence belongs to the DXR family. Mg(2+) is required as a cofactor. Requires Mn(2+) as cofactor.

The enzyme catalyses 2-C-methyl-D-erythritol 4-phosphate + NADP(+) = 1-deoxy-D-xylulose 5-phosphate + NADPH + H(+). It participates in isoprenoid biosynthesis; isopentenyl diphosphate biosynthesis via DXP pathway; isopentenyl diphosphate from 1-deoxy-D-xylulose 5-phosphate: step 1/6. In terms of biological role, catalyzes the NADPH-dependent rearrangement and reduction of 1-deoxy-D-xylulose-5-phosphate (DXP) to 2-C-methyl-D-erythritol 4-phosphate (MEP). The protein is 1-deoxy-D-xylulose 5-phosphate reductoisomerase of Synechocystis sp. (strain ATCC 27184 / PCC 6803 / Kazusa).